Consider the following 117-residue polypeptide: DNA polymerase epsilon subunit 4 (117 aa).

Residues 1 to 36 form a disordered region; the sequence is MAAAAAAGSGTPREEEGPAGEAAASQPQAPTSVPGA. N-acetylalanine is present on A2. A Phosphothreonine modification is found at T11. A compositionally biased stretch (low complexity) spans 19-30; it reads AGEAAASQPQAP. Residue S25 is modified to Phosphoserine.

As to quaternary structure, component of the DNA polymerase epsilon complex consisting of four subunits: the catalytic subunit POLE and the accessory subunits POLE2, POLE3 and POLE4. Interaction with POLE3 is a prerequisite for further binding with POLE and POLE2.

The protein localises to the nucleus. In terms of biological role, accessory component of the DNA polymerase epsilon complex. Participates in DNA repair and in chromosomal DNA replication. The chain is DNA polymerase epsilon subunit 4 (POLE4) from Homo sapiens (Human).